Consider the following 310-residue polypeptide: MSDINAVKHFLLSLQKDICQQLAAIDGGADFAEDEWQRAEGGGGCSRVLSGGRIFERTGVNFSHVTGKSLPPSASTHRPDLAGRSFQAMGVSLVIHPLSPYIPTSHANVRLFVAEKPGEEPVWWFGGGFDLTPYYGFKEDAVHWHQTAHDLCQPFGDDVYPRYKKWCDDYFFLKHRNEARGIGGLFFDDLNEPDFATSFAFIRAVGNGFLDGYLPIVERRKDLAWGERERDFQLYRRGRYVEFNLIWDRGTLFGLQSGGRTESILMSMPPLARWEYQHQPEPDSPEAALYRDFLPARDWLAESNTHNKEA.

Ser92 contributes to the substrate binding site. A divalent metal cation contacts are provided by His96 and His106. His106 acts as the Proton donor in catalysis. 108–110 (NVR) provides a ligand contact to substrate. Residues His145 and His175 each coordinate a divalent metal cation. The segment at 240–275 (YVEFNLIWDRGTLFGLQSGGRTESILMSMPPLARWE) is important for dimerization. Substrate is bound at residue 258 to 260 (GGR).

The protein belongs to the aerobic coproporphyrinogen-III oxidase family. Homodimer. Requires a divalent metal cation as cofactor.

Its subcellular location is the cytoplasm. The catalysed reaction is coproporphyrinogen III + O2 + 2 H(+) = protoporphyrinogen IX + 2 CO2 + 2 H2O. The protein operates within porphyrin-containing compound metabolism; protoporphyrin-IX biosynthesis; protoporphyrinogen-IX from coproporphyrinogen-III (O2 route): step 1/1. Involved in the heme biosynthesis. Catalyzes the aerobic oxidative decarboxylation of propionate groups of rings A and B of coproporphyrinogen-III to yield the vinyl groups in protoporphyrinogen-IX. The protein is Oxygen-dependent coproporphyrinogen-III oxidase of Pectobacterium atrosepticum (strain SCRI 1043 / ATCC BAA-672) (Erwinia carotovora subsp. atroseptica).